A 483-amino-acid polypeptide reads, in one-letter code: Glutamate--tRNA ligase (483 aa).

Positions 9–19 (PSPTGNLHIGT) match the 'HIGH' region motif. Positions 250–254 (KLSKR) match the 'KMSKS' region motif. K253 serves as a coordination point for ATP.

Belongs to the class-I aminoacyl-tRNA synthetase family. Glutamate--tRNA ligase type 1 subfamily. In terms of assembly, monomer.

It is found in the cytoplasm. The catalysed reaction is tRNA(Glu) + L-glutamate + ATP = L-glutamyl-tRNA(Glu) + AMP + diphosphate. Its function is as follows. Catalyzes the attachment of glutamate to tRNA(Glu) in a two-step reaction: glutamate is first activated by ATP to form Glu-AMP and then transferred to the acceptor end of tRNA(Glu). This is Glutamate--tRNA ligase from Synechocystis sp. (strain ATCC 27184 / PCC 6803 / Kazusa).